The chain runs to 336 residues: Ferredoxin--NADP reductase 1 (336 aa).

Residues E37, K45, F50, V90, L125, D287, and T328 each contribute to the FAD site.

It belongs to the ferredoxin--NADP reductase type 2 family. Homodimer. FAD is required as a cofactor.

The enzyme catalyses 2 reduced [2Fe-2S]-[ferredoxin] + NADP(+) + H(+) = 2 oxidized [2Fe-2S]-[ferredoxin] + NADPH. In Bacillus velezensis (strain DSM 23117 / BGSC 10A6 / LMG 26770 / FZB42) (Bacillus amyloliquefaciens subsp. plantarum), this protein is Ferredoxin--NADP reductase 1.